The following is a 463-amino-acid chain: Quinolone resistance protein NorB (463 aa).

14 consecutive transmembrane segments (helical) span residues Ile-17–Val-37, Ile-53–Ala-73, Ile-86–Ile-106, Ile-107–Ile-127, Tyr-142–Ala-162, Leu-165–Ile-185, Phe-201–Thr-221, Ser-230–Leu-250, Thr-273–Val-293, Tyr-299–Ile-319, Pro-334–Leu-354, Ile-357–Tyr-377, Met-403–Val-423, and Ile-435–Val-455.

Belongs to the major facilitator superfamily. TCR/Tet family.

The protein localises to the cell membrane. Multidrug efflux pump that acts independently of NorA and is one of the factors that confers resistance against diverse quinolones and chemical compounds. This is Quinolone resistance protein NorB (norB) from Staphylococcus aureus (strain MRSA252).